Here is a 205-residue protein sequence, read N- to C-terminus: Molybdenum cofactor guanylyltransferase (205 aa).

GTP is bound by residues 14–16, Lys-27, Asp-77, and Asp-107; that span reads LAG. A Mg(2+)-binding site is contributed by Asp-107.

This sequence belongs to the MobA family. As to quaternary structure, monomer. Mg(2+) serves as cofactor.

Its subcellular location is the cytoplasm. It carries out the reaction Mo-molybdopterin + GTP + H(+) = Mo-molybdopterin guanine dinucleotide + diphosphate. Transfers a GMP moiety from GTP to Mo-molybdopterin (Mo-MPT) cofactor (Moco or molybdenum cofactor) to form Mo-molybdopterin guanine dinucleotide (Mo-MGD) cofactor. This is Molybdenum cofactor guanylyltransferase from Burkholderia vietnamiensis (strain G4 / LMG 22486) (Burkholderia cepacia (strain R1808)).